We begin with the raw amino-acid sequence, 135 residues long: Regulator of ribonuclease activity B (135 aa).

Residues 114 to 135 (WGTYFESDEDDEEDESEDKPEA) form a disordered region. Residues 119–135 (ESDEDDEEDESEDKPEA) show a composition bias toward acidic residues.

Belongs to the RraB family. As to quaternary structure, interacts with the C-terminal region of Rne.

It is found in the cytoplasm. Functionally, globally modulates RNA abundance by binding to RNase E (Rne) and regulating its endonucleolytic activity. Can modulate Rne action in a substrate-dependent manner by altering the composition of the degradosome. This is Regulator of ribonuclease activity B from Photobacterium profundum (strain SS9).